A 229-amino-acid polypeptide reads, in one-letter code: Extracellular small neutral protease (229 aa).

The N-terminal stretch at 1 to 28 (MRMPLSVLTAAGLSLATLGLGTAGPASA) is a signal peptide. The propeptide occupies 29–81 (TPTAEGAPVVAYDGSPSAGSPADAKAEAAANRAFFEAVLRSVAEKRAANPKST). Residues Asp-159 and Thr-161 each contribute to the Ca(2+) site. His-166 contributes to the Zn(2+) binding site. The active site involves Glu-167. Residues His-170 and Asp-176 each contribute to the Zn(2+) site. Residues Cys-182 and Cys-195 are joined by a disulfide bond.

It belongs to the peptidase M7 family. In terms of assembly, monomer. Ca(2+) is required as a cofactor. Zn(2+) serves as cofactor.

The protein resides in the secreted. It catalyses the reaction Hydrolyzes proteins with a preference for Tyr or Phe in the P1' position. Has no action on amino-acid p-nitroanilides.. Functionally, milk hydrolyzing. The chain is Extracellular small neutral protease (snpA) from Streptomyces sp. (strain C5).